Here is a 407-residue protein sequence, read N- to C-terminus: Probable tRNA sulfurtransferase (407 aa).

A THUMP domain is found at 61–165 (NEITYRLSKI…LDAIYMYEEV (105 aa)). Residues 183 to 184 (ML), 208 to 209 (HF), arginine 265, glycine 287, and glutamine 296 contribute to the ATP site.

Belongs to the ThiI family.

The protein localises to the cytoplasm. The catalysed reaction is [ThiI sulfur-carrier protein]-S-sulfanyl-L-cysteine + a uridine in tRNA + 2 reduced [2Fe-2S]-[ferredoxin] + ATP + H(+) = [ThiI sulfur-carrier protein]-L-cysteine + a 4-thiouridine in tRNA + 2 oxidized [2Fe-2S]-[ferredoxin] + AMP + diphosphate. The enzyme catalyses [ThiS sulfur-carrier protein]-C-terminal Gly-Gly-AMP + S-sulfanyl-L-cysteinyl-[cysteine desulfurase] + AH2 = [ThiS sulfur-carrier protein]-C-terminal-Gly-aminoethanethioate + L-cysteinyl-[cysteine desulfurase] + A + AMP + 2 H(+). It participates in cofactor biosynthesis; thiamine diphosphate biosynthesis. Catalyzes the ATP-dependent transfer of a sulfur to tRNA to produce 4-thiouridine in position 8 of tRNAs, which functions as a near-UV photosensor. Also catalyzes the transfer of sulfur to the sulfur carrier protein ThiS, forming ThiS-thiocarboxylate. This is a step in the synthesis of thiazole, in the thiamine biosynthesis pathway. The sulfur is donated as persulfide by IscS. The protein is Probable tRNA sulfurtransferase of Staphylococcus aureus (strain NCTC 8325 / PS 47).